The following is a 123-amino-acid chain: Small ribosomal subunit protein uS12c (123 aa).

This sequence belongs to the universal ribosomal protein uS12 family. As to quaternary structure, part of the 30S ribosomal subunit.

It localises to the plastid. Its subcellular location is the chloroplast. Functionally, with S4 and S5 plays an important role in translational accuracy. Located at the interface of the 30S and 50S subunits. The polypeptide is Small ribosomal subunit protein uS12c (rps12) (Chlorokybus atmophyticus (Soil alga)).